A 342-amino-acid polypeptide reads, in one-letter code: GTPase Obg (342 aa).

An Obg domain is found at 1–159 (MQFIDQAQIE…KLLRLELKLL (159 aa)). The OBG-type G domain maps to 160–330 (AEVGIIGLPN…MLQEVWGILD (171 aa)). GTP-binding positions include 166-173 (GLPNAGKS), 191-195 (FTTLI), 213-216 (DIPG), 280-283 (NKID), and 311-313 (SAV). Residues Ser-173 and Thr-193 each coordinate Mg(2+).

This sequence belongs to the TRAFAC class OBG-HflX-like GTPase superfamily. OBG GTPase family. Monomer. The cofactor is Mg(2+).

The protein resides in the cytoplasm. Functionally, an essential GTPase which binds GTP, GDP and possibly (p)ppGpp with moderate affinity, with high nucleotide exchange rates and a fairly low GTP hydrolysis rate. Plays a role in control of the cell cycle, stress response, ribosome biogenesis and in those bacteria that undergo differentiation, in morphogenesis control. The protein is GTPase Obg of Nostoc sp. (strain PCC 7120 / SAG 25.82 / UTEX 2576).